The sequence spans 308 residues: 4-hydroxyproline 2-epimerase (308 aa).

Cys-88 acts as the Proton acceptor in catalysis. Residues 89-90 (GH), His-208, and Asp-232 contribute to the substrate site. Cys-236 functions as the Proton donor in the catalytic mechanism. Position 237-238 (237-238 (GT)) interacts with substrate.

Belongs to the proline racemase family.

The enzyme catalyses trans-4-hydroxy-L-proline = cis-4-hydroxy-D-proline. In terms of biological role, catalyzes the epimerization of trans-4-hydroxy-L-proline (t4LHyp) to cis-4-hydroxy-D-proline (c4DHyp). Is likely involved in a degradation pathway that converts t4LHyp to alpha-ketoglutarate. Can also catalyze the epimerization of trans-3-hydroxy-L-proline (t3LHyp) to cis-3-hydroxy-D-proline (c3DHyp), albeit with 19-fold lower efficiency. Displays no proline racemase activity. This is 4-hydroxyproline 2-epimerase from Chromobacterium violaceum (strain ATCC 12472 / DSM 30191 / JCM 1249 / CCUG 213 / NBRC 12614 / NCIMB 9131 / NCTC 9757 / MK).